The sequence spans 434 residues: Putative ZDHHC-type palmitoyltransferase 1 (434 aa).

2 helical membrane-spanning segments follow: residues Ala-25 to Val-45 and Ile-53 to Ile-73. Positions Lys-115–Tyr-165 constitute a DHHC domain. Cys-145 functions as the S-palmitoyl cysteine intermediate in the catalytic mechanism. A helical membrane pass occupies residues Phe-160 to Ala-180. N-linked (GlcNAc...) asparagine glycosylation is found at Asn-207, Asn-216, Asn-274, Asn-346, Asn-362, Asn-373, Asn-381, Asn-387, and Asn-393. Residues Thr-262 to Gln-330 form a disordered region. Over residues Asn-267–Gly-316 the composition is skewed to low complexity. The interval Thr-365 to Val-434 is disordered. Over residues Asn-373–Asn-387 the composition is skewed to low complexity. Residues Asp-409–Ile-419 are compositionally biased toward basic and acidic residues. Asn-420 carries an N-linked (GlcNAc...) asparagine glycan. Polar residues predominate over residues Asn-420–Val-434.

The protein belongs to the DHHC palmitoyltransferase family.

The protein localises to the membrane. The catalysed reaction is L-cysteinyl-[protein] + hexadecanoyl-CoA = S-hexadecanoyl-L-cysteinyl-[protein] + CoA. The polypeptide is Putative ZDHHC-type palmitoyltransferase 1 (Dictyostelium discoideum (Social amoeba)).